The primary structure comprises 434 residues: Adenylosuccinate synthetase (434 aa).

Residues 12-18 (GDEGKGK) and 40-42 (GHT) contribute to the GTP site. The active-site Proton acceptor is aspartate 13. Positions 13 and 40 each coordinate Mg(2+). IMP contacts are provided by residues 13–16 (DEGK), 38–41 (NAGH), threonine 129, arginine 143, glutamine 224, threonine 239, and arginine 303. Histidine 41 functions as the Proton donor in the catalytic mechanism. Substrate is bound at residue 299–305 (AVTGRPR). Residues arginine 305, 331–333 (KLD), and 413–415 (STG) each bind GTP.

This sequence belongs to the adenylosuccinate synthetase family. Homodimer. Requires Mg(2+) as cofactor.

It is found in the cytoplasm. The enzyme catalyses IMP + L-aspartate + GTP = N(6)-(1,2-dicarboxyethyl)-AMP + GDP + phosphate + 2 H(+). Its pathway is purine metabolism; AMP biosynthesis via de novo pathway; AMP from IMP: step 1/2. Plays an important role in the de novo pathway of purine nucleotide biosynthesis. Catalyzes the first committed step in the biosynthesis of AMP from IMP. The polypeptide is Adenylosuccinate synthetase (Solibacter usitatus (strain Ellin6076)).